A 201-amino-acid chain; its full sequence is Large ribosomal subunit protein uL4 (201 aa).

The interval 44–71 is disordered; sequence RAQKTRAEVTGSGKKPWRQKGTGRARSG.

The protein belongs to the universal ribosomal protein uL4 family. In terms of assembly, part of the 50S ribosomal subunit.

Functionally, one of the primary rRNA binding proteins, this protein initially binds near the 5'-end of the 23S rRNA. It is important during the early stages of 50S assembly. It makes multiple contacts with different domains of the 23S rRNA in the assembled 50S subunit and ribosome. In terms of biological role, forms part of the polypeptide exit tunnel. This Shigella flexneri serotype 5b (strain 8401) protein is Large ribosomal subunit protein uL4.